Reading from the N-terminus, the 211-residue chain is Uridine kinase (211 aa).

Gly15–Thr22 provides a ligand contact to ATP.

This sequence belongs to the uridine kinase family.

The protein localises to the cytoplasm. It carries out the reaction uridine + ATP = UMP + ADP + H(+). The enzyme catalyses cytidine + ATP = CMP + ADP + H(+). It functions in the pathway pyrimidine metabolism; CTP biosynthesis via salvage pathway; CTP from cytidine: step 1/3. The protein operates within pyrimidine metabolism; UMP biosynthesis via salvage pathway; UMP from uridine: step 1/1. The chain is Uridine kinase from Latilactobacillus sakei subsp. sakei (strain 23K) (Lactobacillus sakei subsp. sakei).